Here is a 136-residue protein sequence, read N- to C-terminus: Large-conductance mechanosensitive channel (136 aa).

The next 2 helical transmembrane spans lie at 10–30 (FAMR…AAFG) and 76–96 (GVFI…FMAI).

The protein belongs to the MscL family. Homopentamer.

The protein localises to the cell inner membrane. Its function is as follows. Channel that opens in response to stretch forces in the membrane lipid bilayer. May participate in the regulation of osmotic pressure changes within the cell. The protein is Large-conductance mechanosensitive channel of Escherichia coli O139:H28 (strain E24377A / ETEC).